The primary structure comprises 70 residues: Putative venom toxin Ts29 (70 aa).

Positions 1–20 are cleaved as a signal peptide; the sequence is MSPLFVVLLIATTTFYHSDA.

In terms of tissue distribution, expressed by the venom gland.

The protein localises to the secreted. This is Putative venom toxin Ts29 from Tityus serrulatus (Brazilian scorpion).